We begin with the raw amino-acid sequence, 482 residues long: Nucleoside triphosphate pyrophosphatase/Nudix hydrolase fusion protein (482 aa).

Residues Met-1–Leu-299 are maf-like. Residue Asp-167 is the Proton acceptor of the active site. A Nudix hydrolase domain is found at Gly-338–Leu-475.

It in the N-terminal section; belongs to the Maf family. A divalent metal cation serves as cofactor.

The protein localises to the cytoplasm. It carries out the reaction a ribonucleoside 5'-triphosphate + H2O = a ribonucleoside 5'-phosphate + diphosphate + H(+). The catalysed reaction is a 2'-deoxyribonucleoside 5'-triphosphate + H2O = a 2'-deoxyribonucleoside 5'-phosphate + diphosphate + H(+). Its function is as follows. Nucleoside triphosphate pyrophosphatase. May have a dual role in cell division arrest and in preventing the incorporation of modified nucleotides into cellular nucleic acids. The protein is Nucleoside triphosphate pyrophosphatase/Nudix hydrolase fusion protein of Bifidobacterium longum (strain NCC 2705).